Reading from the N-terminus, the 360-residue chain is Acetylxylan esterase / glucomannan deacetylase (360 aa).

A signal peptide spans 1 to 21 (MKPHALIGLLAGMLLSSSLYA). Residue S151 is the Nucleophile of the active site.

It belongs to the carbohydrate esterase 2 (CE2) family.

Its subcellular location is the secreted. It carries out the reaction Deacetylation of xylans and xylo-oligosaccharides.. The protein operates within glycan degradation; xylan degradation. In terms of biological role, involved in the degradation of plant cell wall polysaccharides. Catalyzes the deacetylation of acetylated birchwood xylan and glucomannan, with a large preference for the latter, and of the synthetic substrate 4-nitrophenyl acetate (4-NPAc). The chain is Acetylxylan esterase / glucomannan deacetylase from Cellvibrio japonicus (strain Ueda107) (Pseudomonas fluorescens subsp. cellulosa).